We begin with the raw amino-acid sequence, 196 residues long: Holliday junction branch migration complex subunit RuvA (196 aa).

The tract at residues 1–63 (MYDYIKGTLV…DDAHLLFGFH (63 aa)) is domain I. Positions 64 to 142 (TEDEKEVFLK…ELPAETTNTT (79 aa)) are domain II. Residues 143–146 (ANQT) form a flexible linker region. The domain III stretch occupies residues 147 to 196 (AGNQQLDEAMEALLALGYKATELKKVKAFFEDTNETAEQYIKSALKMLMK).

It belongs to the RuvA family. In terms of assembly, homotetramer. Forms an RuvA(8)-RuvB(12)-Holliday junction (HJ) complex. HJ DNA is sandwiched between 2 RuvA tetramers; dsDNA enters through RuvA and exits via RuvB. An RuvB hexamer assembles on each DNA strand where it exits the tetramer. Each RuvB hexamer is contacted by two RuvA subunits (via domain III) on 2 adjacent RuvB subunits; this complex drives branch migration. In the full resolvosome a probable DNA-RuvA(4)-RuvB(12)-RuvC(2) complex forms which resolves the HJ.

The protein localises to the cytoplasm. In terms of biological role, the RuvA-RuvB-RuvC complex processes Holliday junction (HJ) DNA during genetic recombination and DNA repair, while the RuvA-RuvB complex plays an important role in the rescue of blocked DNA replication forks via replication fork reversal (RFR). RuvA specifically binds to HJ cruciform DNA, conferring on it an open structure. The RuvB hexamer acts as an ATP-dependent pump, pulling dsDNA into and through the RuvAB complex. HJ branch migration allows RuvC to scan DNA until it finds its consensus sequence, where it cleaves and resolves the cruciform DNA. The sequence is that of Holliday junction branch migration complex subunit RuvA from Streptococcus thermophilus (strain ATCC BAA-491 / LMD-9).